The chain runs to 365 residues: Solute carrier family 35 member G1 (365 aa).

A disordered region spans residues 1–33 (MRPQDSTGVAELQEPGLPLTDDAPPGATEEPAA). Residues 23–33 (APPGATEEPAA) show a composition bias toward low complexity. A run of 10 helical transmembrane segments spans residues 69-89 (GLGL…SLFV), 97-117 (AVEI…PCLI), 131-151 (IFLI…YYAY), 156-176 (LADA…FAWI), 187-207 (ALFT…PFLF), 222-242 (LKGT…LVIL), 252-272 (FLSI…ILSV), 286-306 (LFLI…TKAL), 311-333 (AGPV…IIFF), and 338-357 (TWWT…GAAI). 2 consecutive EamA domains span residues 80–202 (FLFS…LIVR) and 233–357 (VFAA…GAAI).

This sequence belongs to the TMEM20 family. Interacts with STIM1; stimulated by depletion of intracellular calcium. Interacts with ORAI1. Interacts with the plasma membrane calcium-transporting ATPases ATP2B1 and ATP2B4. Interacts with ATP1A1, ATP2A2, KPNB1 and XPO1. As to expression, ubiquitously expressed.

It is found in the cell membrane. It localises to the endoplasmic reticulum membrane. In terms of biological role, may play a role in intracellular calcium sensing and homeostasis. May act as a negative regulator of plasma membrane calcium-transporting ATPases preventing calcium efflux from the cell. This chain is Solute carrier family 35 member G1 (SLC35G1), found in Homo sapiens (Human).